The following is a 73-amino-acid chain: MLIKPAKRSEKIYTIIAIKDSVVTLKNDYQDEKNIQIYEFDLQNIIPEVGKFINLIKYDQQGCSVFEEYDKNI.

This is an uncharacterized protein from Ureaplasma parvum serovar 3 (strain ATCC 700970).